Reading from the N-terminus, the 158-residue chain is Succinate dehydrogenase [ubiquinone] cytochrome b small subunit, mitochondrial (158 aa).

The N-terminal 55 residues, 1 to 55 (MALWRLSVLCGAREGRALFLRTPVVRPALVSAFLQDRPAQGWCGTQHIHLSPSHH), are a transit peptide targeting the mitochondrion. Residues 56-62 (SGSKAAS) lie on the Mitochondrial matrix side of the membrane. Residues 63–84 (LHWTGERVVSVLLLGLIPAAYL) traverse the membrane as a helical segment. Over 85–89 (NPCSA) the chain is Mitochondrial intermembrane. The chain crosses the membrane as a helical span at residues 90 to 110 (MDYSLAATLTLHSHWGIGQVV). His101 serves as a coordination point for heme b. The Mitochondrial matrix segment spans residues 111 to 119 (TDYVHGDAV). Tyr113 provides a ligand contact to a ubiquinone. The chain crosses the membrane as a helical span at residues 120–141 (QKAAKTGLLVLSAFTFAGLCYF). At 142-158 (NYHDVGICKAVAMLWKL) the chain is on the mitochondrial intermembrane side.

It belongs to the CybS family. In terms of assembly, component of complex II composed of four subunits: the flavoprotein (FP) SDHA, iron-sulfur protein (IP) SDHB, and a cytochrome b560 composed of SDHC and SDHD.

The protein localises to the mitochondrion inner membrane. It participates in carbohydrate metabolism; tricarboxylic acid cycle. Membrane-anchoring subunit of succinate dehydrogenase (SDH) that is involved in complex II of the mitochondrial electron transport chain and is responsible for transferring electrons from succinate to ubiquinone (coenzyme Q). SDH also oxidizes malate to the non-canonical enol form of oxaloacetate, enol-oxaloacetate. Enol-oxaloacetate, which is a potent inhibitor of the succinate dehydrogenase activity, is further isomerized into keto-oxaloacetate. This chain is Succinate dehydrogenase [ubiquinone] cytochrome b small subunit, mitochondrial (SDHD), found in Bos taurus (Bovine).